Here is a 555-residue protein sequence, read N- to C-terminus: GMP synthase [glutamine-hydrolyzing] (555 aa).

Positions 8-234 (KILVLNFGSQ…AYNICKCKKQ (227 aa)) constitute a Glutamine amidotransferase type-1 domain. The active-site Nucleophile; for GATase activity is the C89. L-glutamine contacts are provided by Q93, N169, D172, and H208. Catalysis depends on for GATase activity residues H208 and E210. Residues 235-430 (FDPIRYHELE…LNLPEEITNR (196 aa)) enclose the GMPS ATP-PPase domain. 262 to 268 (SGGIDST) contacts ATP. 5 residues coordinate XMP: R336, Q476, K547, I552, and E553.

Homodimer (via the GMPS ATP-PPase domain). Mg(2+) is required as a cofactor.

It catalyses the reaction XMP + L-glutamine + ATP + H2O = GMP + L-glutamate + AMP + diphosphate + 2 H(+). It functions in the pathway purine metabolism; GMP biosynthesis; GMP from XMP (L-Gln route): step 1/1. The GATase domain is allosterically activated by the binding of substrates, ATP and XMP, to the ATPPase domain, thus ensuring that glutamine hydrolysis occurs only when the ATPPase domain is primed to receive ammonia. Inhibited by Na(+). Inhibited by the reaction product GMP. In terms of biological role, catalyzes the conversion of xanthine monophosphate (XMP) to GMP in the presence of glutamine and ATP through an adenyl-XMP intermediate, which is the final step of de novo synthesis of GMP. The conversion of XMP to GMP involves the coordinated action of the glutamine amidotransferase (GATase) domain that catalyzes the hydrolysis of the amide side chain of glutamine producing ammonia and the ATP pyrophosphatase (ATPPase) domain that catalyzes the synthesis of adenyl-XMP intermediate from ATP. The ammonia produced by the GATase domain is tunnelled to the ATP-PPase domain where it attacks the adenyl-XMP intermediate generating GMP. In Plasmodium falciparum (isolate 3D7), this protein is GMP synthase [glutamine-hydrolyzing].